The sequence spans 833 residues: DNA polymerase I, thermostable (833 aa).

The region spanning 173–267 (VPPERWVDFR…FKALRRRTPD (95 aa)) is the 5'-3' exonuclease domain. The interval 412–833 (ERLFQNLFPR…GRDWLEAKQD (422 aa)) is polymerase.

Belongs to the DNA polymerase type-A family.

The enzyme catalyses DNA(n) + a 2'-deoxyribonucleoside 5'-triphosphate = DNA(n+1) + diphosphate. Functionally, in addition to polymerase activity, this DNA polymerase exhibits 5'-3' exonuclease activity. Unlikely to have 3'-5' exonuclease activity due to absence of a 3'-5' exonuclease domain. This is DNA polymerase I, thermostable (polA) from Thermus filiformis.